Here is a 1384-residue protein sequence, read N- to C-terminus: ATP-dependent RNA helicase TDRD9 (1384 aa).

A disordered region spans residues 35-60 (EAPREEVQRSEEVPSEAPTAQAQDPV). The segment covering 36–46 (APREEVQRSEE) has biased composition (basic and acidic residues). The region spanning 144–310 (ISLIESNSVV…FAVPVQNKMN (167 aa)) is the Helicase ATP-binding domain. 157–164 (GATGSGKS) serves as a coordination point for ATP. The DEAH box signature appears at 256 to 259 (DEVH). Positions 379 to 546 (SGAQFVSERS…VLKVKLLDMG (168 aa)) constitute a Helicase C-terminal domain. The 61-residue stretch at 946–1006 (HPHPDLVCLA…REIPCQLLEL (61 aa)) folds into the Tudor domain.

It belongs to the DEAD box helicase family. DEAH subfamily. In terms of assembly, interacts with piRNA-associated proteins PIWIL1 and PIWIL4.

It localises to the cytoplasm. Its subcellular location is the nucleus. The catalysed reaction is ATP + H2O = ADP + phosphate + H(+). In terms of biological role, ATP-binding RNA helicase which plays a central role during spermatogenesis by repressing transposable elements and preventing their mobilization, which is essential for the germline integrity. Acts via the piRNA metabolic process, which mediates the repression of transposable elements during meiosis by forming complexes composed of piRNAs and Piwi proteins and governs the methylation and subsequent repression of transposons. Acts downstream of piRNA biogenesis: exclusively required for transposon silencing in the nucleus, suggesting that it acts as a nuclear effector in the nucleus together with PIWIL4. The chain is ATP-dependent RNA helicase TDRD9 from Rattus norvegicus (Rat).